The primary structure comprises 284 residues: MMFEKDDLGLSLGLNFPKKQINLKSNPSVSVTPSSSSFGLFRRSSWNESFTSSVPNSDSSQKETRTFIRGIDVNRPPSTAEYGDEDAGVSSPNSTVSSSTGKRSEREEDTDPQGSRGISDDEDGDNSRKKLRLSKDQSAILEETFKDHSTLNPKQKQALAKQLGLRARQVEVWFQNRRARTKLKQTEVDCEFLRRCCENLTEENRRLQKEVTELRALKLSPQFYMHMSPPTTLTMCPSCEHVSVPPPQPQAATSAHHRSLPVNAWAPATRISHGLTFDALRPRS.

A compositionally biased stretch (polar residues) spans 48-59 (ESFTSSVPNSDS). A disordered region spans residues 48–132 (ESFTSSVPNS…DGDNSRKKLR (85 aa)). Positions 89 to 100 (VSSPNSTVSSST) are enriched in low complexity. Residues 126 to 185 (NSRKKLRLSKDQSAILEETFKDHSTLNPKQKQALAKQLGLRARQVEVWFQNRRARTKLKQ) constitute a DNA-binding region (homeobox). A leucine-zipper region spans residues 193–214 (LRRCCENLTEENRRLQKEVTEL).

Belongs to the HD-ZIP homeobox family. Class II subfamily. Interacts with DNA as homodimer. As to expression, predominantly expressed in leaves and stems.

It is found in the nucleus. Probable transcription factor involved in the negative regulation of cell elongation and specific cell proliferation processes such as lateral root formation and secondary growth of the vascular system. Acts as a mediator of the red/far-red light effects on leaf cell expansion in the shading response. Binds to the DNA sequence 5'-CAAT[GC]ATTG-3'. Negatively regulates its own expression. The sequence is that of Homeobox-leucine zipper protein HAT4 (HAT4) from Arabidopsis thaliana (Mouse-ear cress).